The chain runs to 132 residues: Actin-related protein 2/3 complex subunit 5A (132 aa).

Ala-2 bears the N-acetylalanine mark.

The protein belongs to the ARPC5 family. In terms of assembly, component of the Arp2/3 complex composed of ARP2, ARP3, ARPC1/p41-ARC, ARPC2/p34-ARC, ARPC3/p21-ARC, ARPC4/p20-ARC and ARPC5/p16-ARC. Expressed at low levels in all tissues with a relatively highest expression in inflorescences.

It localises to the cytoplasm. Its subcellular location is the cytoskeleton. It is found in the cell projection. Functions as a component of the Arp2/3 complex which is involved in regulation of actin polymerization and together with an activating nucleation-promoting factor (NPF) mediates the formation of branched actin networks. Arp2/3 complex plays a critical role in the control of cell morphogenesis via the modulation of cell polarity development. This Arabidopsis thaliana (Mouse-ear cress) protein is Actin-related protein 2/3 complex subunit 5A (ARPC5A).